A 440-amino-acid chain; its full sequence is Xylose isomerase (440 aa).

Residues histidine 100 and aspartate 103 contribute to the active site. Mg(2+) contacts are provided by glutamate 231, glutamate 267, histidine 270, aspartate 295, aspartate 306, aspartate 308, and aspartate 338.

The protein belongs to the xylose isomerase family. Homotetramer. Mg(2+) is required as a cofactor.

The protein resides in the cytoplasm. It carries out the reaction alpha-D-xylose = alpha-D-xylulofuranose. The sequence is that of Xylose isomerase from Burkholderia cenocepacia (strain ATCC BAA-245 / DSM 16553 / LMG 16656 / NCTC 13227 / J2315 / CF5610) (Burkholderia cepacia (strain J2315)).